Consider the following 406-residue polypeptide: Fosmidomycin resistance protein (406 aa).

The Periplasmic segment spans residues 1-42 (MAMSEQPQPVAGAAASTTKARTSFGILGAISLSHLLNDMIQS). The next 2 membrane-spanning stretches (helical) occupy residues 43–63 (LILA…MQIG) and 64–84 (MITL…GYWT). At 85 to 102 (DKYPMPWSLPIGMCFTLS) the chain is on the periplasmic side. Residues 103–123 (GLVLLALAGSFGAVLLAAALV) form a helical membrane-spanning segment. Residues 124–151 (GTGSSVFHPESSRVARMASGGRHGLAQS) are Cytoplasmic-facing. Residues 152–172 (IFQVGGNFGSSLGPLLAAVII) traverse the membrane as a helical segment. At 173-177 (APYGK) the chain is on the periplasmic side. A helical membrane pass occupies residues 178-198 (GNVAWFVLAALLAIVVLAQIS). Over 199–225 (RWYSAQHRMNKGKPKATIINPLPRNKV) the chain is Cytoplasmic. The chain crosses the membrane as a helical span at residues 226–246 (VLAVSILLILIFSKYFYMASI). Residues 247 to 266 (SSYYTFYLMQKFGLSIQNAQ) lie on the Periplasmic side of the membrane. The helical transmembrane segment at 267 to 287 (LHLFAFLFAVAAGTVIGGPVG) threads the bilayer. Residues 288–294 (DKIGRKY) lie on the Cytoplasmic side of the membrane. The helical transmembrane segment at 295-315 (VIWGSILGVAPFTLILPYASL) threads the bilayer. At 316 to 319 (HWTG) the chain is on the periplasmic side. A helical membrane pass occupies residues 320–340 (VLTVIIGFILASAFSAILVYA). At 341-353 (QELLPGRIGMVSG) the chain is on the cytoplasmic side. A helical membrane pass occupies residues 354–374 (LFFGFAFGMGGLGAAVLGLIA). The Periplasmic segment spans residues 375-378 (DHTS). A helical membrane pass occupies residues 379 to 399 (IELVYKICAFLPLLGMLTIFL). Topologically, residues 400–406 (PDNRHKD) are cytoplasmic.

It belongs to the major facilitator superfamily.

The protein localises to the cell inner membrane. Its function is as follows. Confers the resistance against fosmidomycin. The polypeptide is Fosmidomycin resistance protein (fsr) (Escherichia coli (strain K12)).